Consider the following 207-residue polypeptide: MSPLLRRLLLVALLQLACTQAPVSQFDGPSHQKKVVSWIDVYARATCQPREVVVPLSMELMGNVVKQLVPSCVTVQRCGGCCPDDGLECVPIGQHQVRMQILMIQYPSSQLGEMSLEEHSQCECRPKRKESAVKPDRVAIPHHRPQPRSVLSWDSAPGASSPADIIHPTPAPGPSAHAAPSAVSALIPGPAVAAADAAASSIAKGGA.

The first 21 residues, 1–21 (MSPLLRRLLLVALLQLACTQA), serve as a signal peptide directing secretion. 2 disulfides stabilise this stretch: Cys78-Cys122 and Cys82-Cys124. The tract at residues 140 to 182 (IPHHRPQPRSVLSWDSAPGASSPADIIHPTPAPGPSAHAAPSA) is disordered.

The protein belongs to the PDGF/VEGF growth factor family. As to quaternary structure, homodimer; disulfide-linked. Can also form heterodimer with VEGF.

The protein resides in the secreted. Its function is as follows. Growth factor for endothelial cells. VEGF-B167 binds heparin and neuropilin-1 whereas the binding to neuropilin-1 of VEGF-B186 is regulated by proteolysis. The protein is Vascular endothelial growth factor B (Vegfb) of Rattus norvegicus (Rat).